The sequence spans 231 residues: TATA-box-binding protein (231 aa).

2 tandem repeats follow at residues L58 to I134 and I148 to L225.

The protein belongs to the TBP family. As to quaternary structure, belongs to the TFIID complex together with the TBP-associated factors (TAFs). Binds DNA as monomer.

The protein resides in the nucleus. In terms of biological role, general transcription factor that functions at the core of the DNA-binding multiprotein factor TFIID. Binding of TFIID to the TATA box is the initial transcriptional step of the pre-initiation complex (PIC), playing a role in the activation of eukaryotic genes transcribed by RNA polymerase II. In Schizosaccharomyces pombe (strain 972 / ATCC 24843) (Fission yeast), this protein is TATA-box-binding protein (tbp1).